Consider the following 601-residue polypeptide: Glutathione-regulated potassium-efflux system protein KefB (601 aa).

The next 13 helical transmembrane spans lie at 4–24, 29–49, 55–75, 87–107, 111–131, 152–172, 177–197, 207–227, 230–250, 262–282, 284–304, 324–344, and 356–376; these read ADLLTAGVLFLFAAVAAVPLA, IGAVLGYLLAGIAIGPWGLGF, EILHFSELGVVFLMFIIGLEL, IFGVGAAQVLLSAAVLAGLLM, FLWQAAVVGGIGLAMSSTAMA, VLLFQDLAVIPALALVPLLAG, HFDWFKVAMKVLAFAVMLIGG, FIAASGVREVFTAATLLLVLS, LFMDALGLSMALGTFIAGVLL, AIDPFKGLLLGLFFISVGMSL, LGVLYTHLLWVAASVVILVVI, MQFASVLSQGGEFAFVLFSTA, and ALLLVTVTLSMMTTPLLMKGI. An RCK N-terminal domain is found at 400–519; that stretch reads KPQVVVVGFG…AGVTQFSRET (120 aa).

It belongs to the monovalent cation:proton antiporter 2 (CPA2) transporter (TC 2.A.37) family. KefB subfamily. As to quaternary structure, interacts with the regulatory subunit KefG.

The protein localises to the cell inner membrane. In terms of biological role, pore-forming subunit of a potassium efflux system that confers protection against electrophiles. Catalyzes K(+)/H(+) antiport. This is Glutathione-regulated potassium-efflux system protein KefB from Salmonella typhi.